A 362-amino-acid chain; its full sequence is Putative gustatory receptor 89a (362 aa).

Topologically, residues 1–38 (MLRFPHVCGLCLLLKYWQILALAPFRTSEPMVARCQRW) are cytoplasmic. The helical transmembrane segment at 39–59 (MTLIAVFRWLLLTSMAPFVLW) threads the bilayer. The Extracellular portion of the chain corresponds to 60–74 (KSAAMYEATNVRHSM). Residues 75-95 (VFKTIALATMTGDVCISLALL) traverse the membrane as a helical segment. Over 96 to 126 (GNHLWNRRELANLVNDLARLHRRRRLSWWST) the chain is Cytoplasmic. A helical membrane pass occupies residues 127–147 (LFLWLKLLLSLYDLLCSVPFL). The Extracellular portion of the chain corresponds to 148–166 (KGAGGRLPWSQLVAYGVQL). A helical transmembrane segment spans residues 167-187 (YFQHVASVYGNGIFGGILLML). Topologically, residues 188 to 223 (ECYNQLEREEPTNLARLLQKEYSWLRLIQRFVKLFQ) are cytoplasmic. The chain crosses the membrane as a helical span at residues 224-244 (LGIFLLVLGSFVNIMVNIYAF). The Extracellular portion of the chain corresponds to 245–255 (MSYYVSLHGVP). Residues 256 to 276 (LTISNNCLVLAIQLYAVILAA) form a helical membrane-spanning segment. The Cytoplasmic portion of the chain corresponds to 277 to 333 (HLCQVRSAKLRKKCLQLEYVPEGLTQEQAMASTPFPVLTPTGNVKFRILGVFILDNS). A helical membrane pass occupies residues 334 to 354 (FWLFLVSYAMNFIVVILQTSF). At 355–362 (EHINHGEI) the chain is on the extracellular side.

Belongs to the insect chemoreceptor superfamily. Gustatory receptor (GR) family. Gr77a subfamily.

It localises to the cell membrane. Its function is as follows. Probable gustatory receptor which mediates acceptance or avoidance behavior, depending on its substrates. The chain is Putative gustatory receptor 89a (Gr89a) from Drosophila melanogaster (Fruit fly).